A 244-amino-acid chain; its full sequence is Ureidoacrylate amidohydrolase RutB (244 aa).

Residue aspartate 38 is the Proton acceptor of the active site. Residue lysine 147 is part of the active site. Cysteine 180 (nucleophile) is an active-site residue.

It belongs to the isochorismatase family. RutB subfamily.

It carries out the reaction (Z)-3-ureidoacrylate + H2O + H(+) = (Z)-3-aminoacrylate + NH4(+) + CO2. The catalysed reaction is (Z)-3-ureidoacrylate + H2O = (Z)-3-aminoacrylate + carbamate + H(+). The enzyme catalyses (Z)-2-methylureidoacrylate + H2O + H(+) = (Z)-2-methylaminoacrylate + NH4(+) + CO2. Hydrolyzes ureidoacrylate to form aminoacrylate and carbamate. The carbamate hydrolyzes spontaneously, thereby releasing one of the nitrogen atoms of the pyrimidine ring as ammonia and one of its carbon atoms as CO2. The protein is Ureidoacrylate amidohydrolase RutB of Shigella sonnei (strain Ss046).